The chain runs to 137 residues: Large ribosomal subunit protein uL16c (137 aa).

The protein belongs to the universal ribosomal protein uL16 family. As to quaternary structure, part of the 50S ribosomal subunit.

The protein resides in the plastid. Its subcellular location is the chloroplast. The sequence is that of Large ribosomal subunit protein uL16c from Trieres chinensis (Marine centric diatom).